The chain runs to 357 residues: UDP-3-O-acylglucosamine N-acyltransferase (357 aa).

His-258 functions as the Proton acceptor in the catalytic mechanism.

This sequence belongs to the transferase hexapeptide repeat family. LpxD subfamily. In terms of assembly, homotrimer.

The enzyme catalyses a UDP-3-O-[(3R)-3-hydroxyacyl]-alpha-D-glucosamine + a (3R)-hydroxyacyl-[ACP] = a UDP-2-N,3-O-bis[(3R)-3-hydroxyacyl]-alpha-D-glucosamine + holo-[ACP] + H(+). It functions in the pathway bacterial outer membrane biogenesis; LPS lipid A biosynthesis. Functionally, catalyzes the N-acylation of UDP-3-O-acylglucosamine using 3-hydroxyacyl-ACP as the acyl donor. Is involved in the biosynthesis of lipid A, a phosphorylated glycolipid that anchors the lipopolysaccharide to the outer membrane of the cell. The chain is UDP-3-O-acylglucosamine N-acyltransferase from Azorhizobium caulinodans (strain ATCC 43989 / DSM 5975 / JCM 20966 / LMG 6465 / NBRC 14845 / NCIMB 13405 / ORS 571).